We begin with the raw amino-acid sequence, 481 residues long: UDP-N-acetylmuramate--L-alanine ligase (481 aa).

135-141 (GTHGKTT) provides a ligand contact to ATP.

This sequence belongs to the MurCDEF family.

It is found in the cytoplasm. The catalysed reaction is UDP-N-acetyl-alpha-D-muramate + L-alanine + ATP = UDP-N-acetyl-alpha-D-muramoyl-L-alanine + ADP + phosphate + H(+). It participates in cell wall biogenesis; peptidoglycan biosynthesis. Functionally, cell wall formation. This is UDP-N-acetylmuramate--L-alanine ligase from Nostoc punctiforme (strain ATCC 29133 / PCC 73102).